The chain runs to 460 residues: GTPase Der (460 aa).

EngA-type G domains lie at glutamine 2–phenylalanine 164 and isoleucine 196–threonine 368. Residues glycine 8–serine 15, aspartate 55–leucine 59, asparagine 116–aspartate 119, glycine 202–serine 209, aspartate 249–isoleucine 253, and asparagine 313–aspartate 316 each bind GTP. Residues glutamine 369–glycine 453 enclose the KH-like domain.

This sequence belongs to the TRAFAC class TrmE-Era-EngA-EngB-Septin-like GTPase superfamily. EngA (Der) GTPase family. Associates with the 50S ribosomal subunit.

Its function is as follows. GTPase that plays an essential role in the late steps of ribosome biogenesis. The polypeptide is GTPase Der (Campylobacter jejuni subsp. jejuni serotype O:6 (strain 81116 / NCTC 11828)).